A 224-amino-acid chain; its full sequence is Ribonuclease T (224 aa).

The 175-residue stretch at 32–206 (VVVDVETGGF…YDTEKTAELF (175 aa)) folds into the Exonuclease domain. 4 residues coordinate Mg(2+): aspartate 35, glutamate 37, histidine 193, and aspartate 198. The Proton donor/acceptor role is filled by histidine 193.

The protein belongs to the RNase T family. In terms of assembly, homodimer. Requires Mg(2+) as cofactor.

Functionally, trims short 3' overhangs of a variety of RNA species, leaving a one or two nucleotide 3' overhang. Responsible for the end-turnover of tRNA: specifically removes the terminal AMP residue from uncharged tRNA (tRNA-C-C-A). Also appears to be involved in tRNA biosynthesis. In Pseudomonas fluorescens (strain Pf0-1), this protein is Ribonuclease T.